The sequence spans 403 residues: ATP phosphoribosyltransferase regulatory subunit (403 aa).

This sequence belongs to the class-II aminoacyl-tRNA synthetase family. HisZ subfamily. Heteromultimer composed of HisG and HisZ subunits.

It localises to the cytoplasm. The protein operates within amino-acid biosynthesis; L-histidine biosynthesis; L-histidine from 5-phospho-alpha-D-ribose 1-diphosphate: step 1/9. In terms of biological role, required for the first step of histidine biosynthesis. May allow the feedback regulation of ATP phosphoribosyltransferase activity by histidine. This Nostoc punctiforme (strain ATCC 29133 / PCC 73102) protein is ATP phosphoribosyltransferase regulatory subunit.